The following is a 4518-amino-acid chain: Dynein axonemal heavy chain 11 (4518 aa).

A stem region spans residues 1 to 1857 (MAASVAAQEA…LVHICDAQFQ (1857 aa)). AAA stretches follow at residues 1858-2079 (YFYE…VLVV), 2139-2368 (QMVR…TSFK), 2474-2721 (TMDP…VFQG), and 2819-3068 (NYND…EGRH). ATP is bound by residues 1896–1903 (GPAGTGKT), 2177–2184 (GNAGTGKS), 2512–2519 (GNAGVGKT), and 2857–2864 (GVGGSGKQ). A stalk region spans residues 3074–3405 (KSFLEQISLF…GQSIKSFEAQ (332 aa)). Positions 3322 to 3391 (LAQANLELAT…NRLVKELEVK (70 aa)) form a coiled coil. AAA regions lie at residues 3461–3688 (LTDD…EIER) and 3898–4124 (LRNF…VLYN).

The protein belongs to the dynein heavy chain family. Consists of at least two heavy chains and a number of intermediate and light chains. Interacts with CFAP45.

It localises to the cytoplasm. Its subcellular location is the cytoskeleton. The protein localises to the cilium axoneme. Functionally, force generating protein of respiratory cilia. Produces force towards the minus ends of microtubules. Dynein has ATPase activity; the force-producing power stroke is thought to occur on release of ADP. In Sus scrofa (Pig), this protein is Dynein axonemal heavy chain 11 (DNAH11).